A 280-amino-acid polypeptide reads, in one-letter code: 4-diphosphocytidyl-2-C-methyl-D-erythritol kinase (280 aa).

Residue Lys8 is part of the active site. 91–101 (PVAAGLAGGSS) is an ATP binding site. Asp133 is an active-site residue.

Belongs to the GHMP kinase family. IspE subfamily.

It carries out the reaction 4-CDP-2-C-methyl-D-erythritol + ATP = 4-CDP-2-C-methyl-D-erythritol 2-phosphate + ADP + H(+). It functions in the pathway isoprenoid biosynthesis; isopentenyl diphosphate biosynthesis via DXP pathway; isopentenyl diphosphate from 1-deoxy-D-xylulose 5-phosphate: step 3/6. In terms of biological role, catalyzes the phosphorylation of the position 2 hydroxy group of 4-diphosphocytidyl-2C-methyl-D-erythritol. The sequence is that of 4-diphosphocytidyl-2-C-methyl-D-erythritol kinase from Clostridium kluyveri (strain NBRC 12016).